The following is a 527-amino-acid chain: Amine oxidase [flavin-containing] A (527 aa).

Met1 carries the post-translational modification N-acetylmethionine. The Cytoplasmic segment spans residues 1–497 (MENQEKASIA…HTFWERNLPS (497 aa)). Ser383 carries the post-translational modification Phosphoserine. Residue Cys406 is modified to S-8alpha-FAD cysteine. Residues 498 to 518 (VSGLLKIIGFSTSVTALGFVL) form a helical; Anchor for type IV membrane protein membrane-spanning segment. The Mitochondrial intermembrane segment spans residues 519–527 (YKYKLLPRS). Positions 520–522 (KYK) are interaction with membrane phospholipid headgroups.

Belongs to the flavin monoamine oxidase family. In terms of assembly, monomer, homo- or heterodimer (containing two subunits of similar size). Each subunit contains a covalently bound flavin. Enzymatically active as monomer. FAD is required as a cofactor.

Its subcellular location is the mitochondrion outer membrane. The catalysed reaction is a secondary aliphatic amine + O2 + H2O = a primary amine + an aldehyde + H2O2. The enzyme catalyses a primary methyl amine + O2 + H2O = an aldehyde + H2O2 + NH4(+). It carries out the reaction (R)-adrenaline + O2 + H2O = (R)-3,4-dihydroxymandelaldehyde + methylamine + H2O2. It catalyses the reaction dopamine + O2 + H2O = 3,4-dihydroxyphenylacetaldehyde + H2O2 + NH4(+). The catalysed reaction is tyramine + O2 + H2O = (4-hydroxyphenyl)acetaldehyde + H2O2 + NH4(+). The enzyme catalyses (R)-noradrenaline + O2 + H2O = (R)-3,4-dihydroxymandelaldehyde + H2O2 + NH4(+). It carries out the reaction serotonin + O2 + H2O = (5-hydroxyindol-3-yl)acetaldehyde + H2O2 + NH4(+). It catalyses the reaction kynuramine + O2 + H2O = 3-(2-aminophenyl)-3-oxopropanal + H2O2 + NH4(+). The catalysed reaction is tryptamine + O2 + H2O = indole-3-acetaldehyde + H2O2 + NH4(+). The enzyme catalyses 2-phenylethylamine + O2 + H2O = 2-phenylacetaldehyde + H2O2 + NH4(+). Catalyzes the oxidative deamination of primary and some secondary amine such as neurotransmitters, with concomitant reduction of oxygen to hydrogen peroxide and has important functions in the metabolism of neuroactive and vasoactive amines in the central nervous system and peripheral tissues. Preferentially oxidizes serotonin. Also catalyzes the oxidative deamination of kynuramine to 3-(2-aminophenyl)-3-oxopropanal that can spontaneously condense to 4-hydroxyquinoline. The chain is Amine oxidase [flavin-containing] A from Pongo abelii (Sumatran orangutan).